A 626-amino-acid chain; its full sequence is Chaperone protein HtpG (626 aa).

Positions methionine 1–arginine 339 are a; substrate-binding. The b stretch occupies residues glutamate 340–lysine 555. The segment at leucine 556–glycine 626 is c.

This sequence belongs to the heat shock protein 90 family. Homodimer.

The protein localises to the cytoplasm. Its function is as follows. Molecular chaperone. Has ATPase activity. In Histophilus somni (strain 2336) (Haemophilus somnus), this protein is Chaperone protein HtpG.